A 226-amino-acid polypeptide reads, in one-letter code: Killer cell lectin-like receptor subfamily E member 1 (226 aa).

A disordered region spans residues 1 to 28; that stretch reads MDEAPVTRSTLNVNSQQKSKAKNKIKNT. Over 1-68 the chain is Cytoplasmic; sequence MDEAPVTRST…GKGNCSPPWR (68 aa). Residues 7–18 show a composition bias toward polar residues; sequence TRSTLNVNSQQK. Residues 69 to 89 form a helical; Signal-anchor for type II membrane protein membrane-spanning segment; that stretch reads LLSSVLGAMCLLLMAVAMVMT. Residues 90–226 are Extracellular-facing; it reads TFTTKSSSER…ANKLTYICKK (137 aa). 3 disulfide bridges follow: cysteine 113–cysteine 124, cysteine 141–cysteine 224, and cysteine 202–cysteine 216. The C-type lectin domain maps to 120–225; sequence FRCSCYFFSK…CANKLTYICK (106 aa). N-linked (GlcNAc...) asparagine glycosylation occurs at asparagine 145.

As to quaternary structure, heterodimer; with KLRI1 or KLRI2. In terms of tissue distribution, expressed in natural killer (NK) cells (at protein level). Also detected in natural killer T (NKT) cells (at protein level). Has little or no expression in T cells (at protein level).

The protein localises to the cell membrane. Lectin-like receptor for natural killer (NK) cells. Can either inhibit or activate NK cell cytotoxic activity, depending on its binding partner. Heterodimer formation with KLRI1 mediates NK cell inhibition whereas heterodimer formation with KLRI2 mediates NK cell activation. Plays a role in allogeneic recognition by the immune system. This is Killer cell lectin-like receptor subfamily E member 1 from Mus musculus (Mouse).